A 233-amino-acid polypeptide reads, in one-letter code: Lysine exporter LysE (233 aa).

At 1 to 2 (ME) the chain is on the cytoplasmic side. Residues 3–23 (IFITGLLLGASLLLSIGPQNV) form a helical membrane-spanning segment. Residues 24 to 65 (LVIKQGIKREGLIAVLLVCLISDVFLFIAGTLGVDLLSNAAP) lie on the Periplasmic side of the membrane. Residues 66 to 86 (IVLDIMRWGGIAYLLWFAVMA) form a helical membrane-spanning segment. Topologically, residues 87 to 143 (AKDAMTNKVEAPQIIEETEPTVPDDTPLGGSAVATDTRNRVRVEVSVDKQRVWVKPM) are cytoplasmic. Residues 144 to 164 (LMAIVLTWLNPNAYLDAFVFI) form a helical membrane-spanning segment. Residues 165–176 (GGVGAQYGDTGR) are Periplasmic-facing. Residues 177–197 (WIFAAGAFAASLIWFPLVGFG) traverse the membrane as a helical segment. Topologically, residues 198 to 212 (AAALSRPLSSPKVWR) are cytoplasmic. A helical transmembrane segment spans residues 213–233 (WINVVVAVVMTALAIKLMLMG).

This sequence belongs to the LysE/ArgO transporter (TC 2.A.75) family.

Its subcellular location is the cell inner membrane. Its activity is regulated as follows. Transport process is modulated by three forces: the membrane potential, the chemical potential of lysine, and the proton gradient. Strongly inhibited by CCCP and valinomycin. Catalyzes the efflux of L-lysine. Can also export L-arginine and L-citrulline. The lysEG system prevents bacteriostasis due to elevated L-lysine or L-arginine concentrations that arise during growth in the presence of peptides or in mutants possessing a deregulated biosynthesis pathway. In vitro, can also export D-lysine during biotechnological production of D-amino acids. This is Lysine exporter LysE from Corynebacterium glutamicum (strain ATCC 13032 / DSM 20300 / JCM 1318 / BCRC 11384 / CCUG 27702 / LMG 3730 / NBRC 12168 / NCIMB 10025 / NRRL B-2784 / 534).